The chain runs to 506 residues: Ecdysteroid UDP-glucosyltransferase (506 aa).

A signal peptide spans 1–18 (MTILCWLALLSTLTAVNA).

The protein belongs to the UDP-glycosyltransferase family. Post-translationally, glycosylated.

In terms of biological role, catalyzes the transfer of glucose from UDP-glucose to ecdysteroids which are insect molting hormones. Acts on the host at the organismal level to block its development, thereby increasing the yield of progeny virus. The protein is Ecdysteroid UDP-glucosyltransferase (EGT) of Lepidoptera (butterflies and moths).